Consider the following 194-residue polypeptide: E3 ubiquitin-protein ligase RNF185 (194 aa).

The segment covering 1–27 has biased composition (low complexity); it reads MASAAASESSSSSSSSSAGAANGQSAG. The disordered stretch occupies residues 1-32; that stretch reads MASAAASESSSSSSSSSAGAANGQSAGESGGG. The segment at 31–82 is required for ubiquitin ligase activity and protection against ER stress-induced cell death; it reads GGGAQDSTFECNICLDTSKDAVISLCGHLFCWPCLHQWLETRPNRQVCPVCK. Residues 41-82 form an RING-type zinc finger; it reads CNICLDTSKDAVISLCGHLFCWPCLHQWLETRPNRQVCPVCK. Residues 92–126 form a disordered region; that stretch reads PLYGRGSTGQQDPREKTPPRPQGQRPEPENRGGFQ. 2 helical membrane-spanning segments follow: residues 133 to 153 and 174 to 194; these read GGFQ…ATAF and QFLS…LLIA.

The protein localises to the mitochondrion outer membrane. The protein resides in the endoplasmic reticulum membrane. The catalysed reaction is S-ubiquitinyl-[E2 ubiquitin-conjugating enzyme]-L-cysteine + [acceptor protein]-L-lysine = [E2 ubiquitin-conjugating enzyme]-L-cysteine + N(6)-ubiquitinyl-[acceptor protein]-L-lysine.. It participates in protein modification; protein ubiquitination. In terms of biological role, E3 ubiquitin-protein ligase that regulates selective mitochondrial autophagy by mediating 'Lys-63'-linked polyubiquitination. Acts in the endoplasmic reticulum (ER)-associated degradation (ERAD) pathway, which targets misfolded proteins that accumulate in the endoplasmic reticulum (ER) for ubiquitination and subsequent proteasome-mediated degradation. Protects cells from ER stress-induced apoptosis. Responsible for the cotranslational ubiquitination and degradation of CFTR in the ERAD pathway. Also acts as a regulator of the innate antiviral response by catalyzing 'Lys-27'-linked polyubiquitination of CGAS, thereby promoting CGAS cyclic GMP-AMP synthase activity. Preferentially associates with the E2 enzymes UBE2J1 and UBE2J2. The polypeptide is E3 ubiquitin-protein ligase RNF185 (rnf185) (Danio rerio (Zebrafish)).